A 125-amino-acid polypeptide reads, in one-letter code: MIYRLKKNFEFTIVYKRGKSFANELLVMYILKNRRNKDRDFLAYSKVGISVSKKVGNSVVRSRCKRLITESFRLNYNYIVKGYDFVFIARNPLQSKSYFEVERAMRSLIKKAGLYNNEEITNTPN.

The protein belongs to the RnpA family. In terms of assembly, consists of a catalytic RNA component (M1 or rnpB) and a protein subunit.

It carries out the reaction Endonucleolytic cleavage of RNA, removing 5'-extranucleotides from tRNA precursor.. Functionally, RNaseP catalyzes the removal of the 5'-leader sequence from pre-tRNA to produce the mature 5'-terminus. It can also cleave other RNA substrates such as 4.5S RNA. The protein component plays an auxiliary but essential role in vivo by binding to the 5'-leader sequence and broadening the substrate specificity of the ribozyme. This is Ribonuclease P protein component from Clostridium beijerinckii (strain ATCC 51743 / NCIMB 8052) (Clostridium acetobutylicum).